We begin with the raw amino-acid sequence, 237 residues long: MRPSQRAADELRPVTFERNVARYAEGSCLIKFGSTHVLCTASLEDKPPAWLRGQGRGWVSAEYAMLPRATHTRTKRESTTGKPSGRTQEIQRLIGRSLRAVTNLQGLGERQITIDCDVLQADGGTRTAAITGAWVALHDCLKWMRQRSIIKDLPLRDHVAAISCGVSNGESVLDLDYAEDSAAETDANFVITGSGSLVEVQATAEGAVFTETQLTAMLALARGGITTLVEMQKAAVA.

Residues Arg-86 and 124–126 (GTR) each bind phosphate.

This sequence belongs to the RNase PH family. As to quaternary structure, homohexameric ring arranged as a trimer of dimers.

It catalyses the reaction tRNA(n+1) + phosphate = tRNA(n) + a ribonucleoside 5'-diphosphate. Its function is as follows. Phosphorolytic 3'-5' exoribonuclease that plays an important role in tRNA 3'-end maturation. Removes nucleotide residues following the 3'-CCA terminus of tRNAs; can also add nucleotides to the ends of RNA molecules by using nucleoside diphosphates as substrates, but this may not be physiologically important. Probably plays a role in initiation of 16S rRNA degradation (leading to ribosome degradation) during starvation. The chain is Ribonuclease PH from Methylocella silvestris (strain DSM 15510 / CIP 108128 / LMG 27833 / NCIMB 13906 / BL2).